The following is a 1424-amino-acid chain: DNA-directed RNA polymerase subunit beta' (1424 aa).

4 residues coordinate Zn(2+): Cys-60, Cys-62, Cys-75, and Cys-78. The Mg(2+) site is built by Asp-449, Asp-451, and Asp-453. Positions 783, 857, 864, and 867 each coordinate Zn(2+).

It belongs to the RNA polymerase beta' chain family. The RNAP catalytic core consists of 2 alpha, 1 beta, 1 beta' and 1 omega subunit. When a sigma factor is associated with the core the holoenzyme is formed, which can initiate transcription. Requires Mg(2+) as cofactor. Zn(2+) is required as a cofactor.

The catalysed reaction is RNA(n) + a ribonucleoside 5'-triphosphate = RNA(n+1) + diphosphate. DNA-dependent RNA polymerase catalyzes the transcription of DNA into RNA using the four ribonucleoside triphosphates as substrates. The protein is DNA-directed RNA polymerase subunit beta' of Treponema denticola (strain ATCC 35405 / DSM 14222 / CIP 103919 / JCM 8153 / KCTC 15104).